The following is a 283-amino-acid chain: Peroxisome biogenesis protein 22 (283 aa).

An N-acetylalanine modification is found at Ala2. The chain crosses the membrane as a helical span at residues 45-62 (IGAIAGLAIAVIFTWRAI). The disordered stretch occupies residues 66–107 (GEQRQRRQPKRRIHNAETSSAAAAASQSNLASSVAPEVSSPR). Residues 81 to 100 (AETSSAAAAASQSNLASSVA) are compositionally biased toward low complexity.

The protein belongs to the peroxin-22 family. Interacts with PEX4.

The protein resides in the peroxisome membrane. Its function is as follows. May be tethered PEX4 to the peroxisome membrane and may be involved in a late step of the matrix protein import. Does not play a role in the biogenesis of the peroxisomal membrane. This is Peroxisome biogenesis protein 22 (PEX22) from Arabidopsis thaliana (Mouse-ear cress).